Reading from the N-terminus, the 508-residue chain is Glycerol kinase (508 aa).

Thr15 contributes to the ADP binding site. Positions 15, 16, and 17 each coordinate ATP. Thr15 serves as a coordination point for sn-glycerol 3-phosphate. Arg19 is a binding site for ADP. Residues Arg85, Glu86, Tyr138, and Asp251 each contribute to the sn-glycerol 3-phosphate site. The glycerol site is built by Arg85, Glu86, Tyr138, Asp251, and Gln252. ADP contacts are provided by Thr273, Gly317, and Gly419. Positions 273, 317, and 419 each coordinate ATP.

The protein belongs to the FGGY kinase family.

It carries out the reaction glycerol + ATP = sn-glycerol 3-phosphate + ADP + H(+). Its pathway is polyol metabolism; glycerol degradation via glycerol kinase pathway; sn-glycerol 3-phosphate from glycerol: step 1/1. Inhibited by fructose 1,6-bisphosphate (FBP). Key enzyme in the regulation of glycerol uptake and metabolism. Catalyzes the phosphorylation of glycerol to yield sn-glycerol 3-phosphate. The polypeptide is Glycerol kinase (Mycoplasma genitalium (strain ATCC 33530 / DSM 19775 / NCTC 10195 / G37) (Mycoplasmoides genitalium)).